The chain runs to 206 residues: Venom allergen 5 2 (206 aa).

4 cysteine pairs are disulfide-bonded: Cys4/Cys16, Cys8/Cys104, Cys28/Cys96, and Cys172/Cys189. An SCP domain is found at 48 to 191 (DEHNRFRQKV…MKSHYLVCNY (144 aa)).

It belongs to the CRISP family. Venom allergen 5-like subfamily. Expressed by the venom gland.

It is found in the secreted. The chain is Venom allergen 5 2 from Polybia paulista (Neotropical social wasp).